The chain runs to 74 residues: U19-theraphotoxin-Cg1a (74 aa).

The first 7 residues, 1-7 (IMFVWAS), serve as a signal peptide directing secretion. A propeptide spanning residues 8–36 (AAEVEERGSDQRDSPASLKSMETIFQSEQ) is cleaved from the precursor. 3 disulfide bridges follow: Cys-39–Cys-53, Cys-46–Cys-58, and Cys-52–Cys-66.

It belongs to the neurotoxin 10 (Hwtx-1) family. 38 (Jztx-33) subfamily. In terms of tissue distribution, expressed by the venom gland.

The protein localises to the secreted. Its function is as follows. Probable ion channel inhibitor. The polypeptide is U19-theraphotoxin-Cg1a (Chilobrachys guangxiensis (Chinese earth tiger tarantula)).